Here is a 430-residue protein sequence, read N- to C-terminus: Tol-Pal system protein TolB (430 aa).

An N-terminal signal peptide occupies residues 1–21 (MKQAFRVALSVLMLFVAVAHA).

The protein belongs to the TolB family. The Tol-Pal system is composed of five core proteins: the inner membrane proteins TolA, TolQ and TolR, the periplasmic protein TolB and the outer membrane protein Pal. They form a network linking the inner and outer membranes and the peptidoglycan layer.

It localises to the periplasm. Its function is as follows. Part of the Tol-Pal system, which plays a role in outer membrane invagination during cell division and is important for maintaining outer membrane integrity. TolB occupies a key intermediary position in the Tol-Pal system because it communicates directly with both membrane-embedded components, Pal in the outer membrane and TolA in the inner membrane. The polypeptide is Tol-Pal system protein TolB (Erwinia tasmaniensis (strain DSM 17950 / CFBP 7177 / CIP 109463 / NCPPB 4357 / Et1/99)).